Here is a 430-residue protein sequence, read N- to C-terminus: Sulfide-quinone reductase (430 aa).

FAD is bound by residues 9–13, 34–36, 42–43, and threonine 105; these read GGGVG, SDR, and TP. The active-site Cysteine persulfide intermediate is the cysteine 156. 2 disulfide bridges follow: cysteine 280/cysteine 422 and cysteine 419/cysteine 430. The FAD site is built by valine 294 and glycine 314. Residue isoleucine 346 coordinates a quinone. Cysteine 347 serves as the catalytic Cysteine persulfide intermediate. Lysine 382 contributes to the FAD binding site.

This sequence belongs to the SQRD family. Homotrimer. FAD serves as cofactor.

It is found in the membrane. The enzyme catalyses n a quinone + n hydrogen sulfide + n H(+) = polysulfur(n-2) + n a quinol. Catalyzes the oxidation of hydrogen sulfide, with the help of a quinone. Consecutive reaction cycles lead to the accumulation of a polysulfide product on the active site Cys residues; these products are released when they exceed a critical length, typically as cyclooctasulfur. In Aquifex aeolicus (strain VF5), this protein is Sulfide-quinone reductase.